The sequence spans 419 residues: O-antigen ligase (419 aa).

The Cytoplasmic segment spans residues 1–19 (MLTSFKLHSLKPYTLKSSM). The helical transmembrane segment at 20-38 (ILEIITYILCFFSMIIAFV) threads the bilayer. The Periplasmic segment spans residues 39-43 (DNTFS). A helical transmembrane segment spans residues 44–61 (IKIYNITAIVCLLSLILR). Residues 62-71 (GRQENYNIKN) lie on the Cytoplasmic side of the membrane. Residues 72-91 (LILPLSIFLIGLLDLIWYSA) traverse the membrane as a helical segment. The Periplasmic segment spans residues 92 to 107 (FKVDNSPFRATYHSYL). The helical transmembrane segment at 108–125 (NTAKIFIFGSFIVFLTLT) threads the bilayer. Over 126–134 (SQLKSKKES) the chain is Cytoplasmic. Residues 135 to 153 (VLYTLYSLSFLIAGYAMYI) form a helical membrane-spanning segment. The Periplasmic portion of the chain corresponds to 154–167 (NSIHENDRISFGVG). A helical transmembrane segment spans residues 168 to 187 (TATGAAYSTMLIGIVSGVAI). Topologically, residues 188–194 (LYTKKNH) are cytoplasmic. The chain crosses the membrane as a helical span at residues 195-211 (PFLFLLNSCAVLYVLAL). At 212–216 (TQTRA) the chain is on the periplasmic side. The chain crosses the membrane as a helical span at residues 217 to 234 (TLLLFPIICVAALIAYYN). Residues 235-240 (KSPKKF) lie on the Cytoplasmic side of the membrane. A helical transmembrane segment spans residues 241 to 259 (TSSIVLLIAILASIVIIFN). Residues 260–348 (KPIQNRYNEA…NEIIEAGSLK (89 aa)) are Periplasmic-facing. A helical membrane pass occupies residues 349 to 367 (GLMGIFSTLFLYFSLFYIA). The Cytoplasmic portion of the chain corresponds to 368–372 (YKKRA). A helical transmembrane segment spans residues 373–391 (LGLLILTLGIVGIGLSDVI). Topologically, residues 392-396 (IWARS) are periplasmic. Residues 397-412 (IPIIIISAIVLLLVIN) form a helical membrane-spanning segment. Topologically, residues 413 to 419 (NRNNTIN) are cytoplasmic.

In terms of assembly, homodimer.

The protein localises to the cell inner membrane. It carries out the reaction a lipid-linked O antigen + a lipid A-core oligosaccharide = a lipopolysaccharide + a polyisoprenyl diphosphate.. It participates in bacterial outer membrane biogenesis; lipopolysaccharide biosynthesis. Activity does not require ATP and magnesium ions. Transferase involved in the biosynthesis of the lipopolysaccharide (LPS). In vitro, catalyzes the transfer of a polymerized O-antigen molecule from its polyprenyl diphosphate membrane anchor to a terminal sugar of the lipid A-core oligosaccharide, finalizing the biosynthesis of the lipopolysaccharide. The enzyme is functional and can be used to give diverse hybrid O-antigens in vitro, but K12 strains do not produce the O-antigen in vivo due to mutations in the rfb gene cluster. K12 strains are phenotypically rough, their lipopolysaccharide having a complete core structure, but no O-antigen. In highly mucoid K12 strains, WaaL can ligate colanic acid (CA or M-antigen) repeats to a significant proportion of lipopolysaccharide (LPS) core acceptor molecules, forming the LPS glycoform M(LPS). The attachment point was identified as O-7 of the L-glycero-D-manno-heptose of the outer LPS core, the same position used for O-antigen ligation. Cannot catalyze ATP hydrolysis in vitro. The protein is O-antigen ligase of Escherichia coli (strain K12).